The chain runs to 194 residues: Holliday junction branch migration complex subunit RuvA (194 aa).

Residues 1 to 64 (MIGRLRGVLT…DDSAALYGFL (64 aa)) form a domain I region. The interval 65 to 140 (SESERRLFRH…RAADFNNGIS (76 aa)) is domain II. The flexible linker stretch occupies residues 140 to 144 (STSGK). The segment at 145–194 (LNLDTVSEAALALQQLGYKPAEAARMARDAGTESDDVASVIKKALQAALR) is domain III.

This sequence belongs to the RuvA family. Homotetramer. Forms an RuvA(8)-RuvB(12)-Holliday junction (HJ) complex. HJ DNA is sandwiched between 2 RuvA tetramers; dsDNA enters through RuvA and exits via RuvB. An RuvB hexamer assembles on each DNA strand where it exits the tetramer. Each RuvB hexamer is contacted by two RuvA subunits (via domain III) on 2 adjacent RuvB subunits; this complex drives branch migration. In the full resolvosome a probable DNA-RuvA(4)-RuvB(12)-RuvC(2) complex forms which resolves the HJ.

It localises to the cytoplasm. Functionally, the RuvA-RuvB-RuvC complex processes Holliday junction (HJ) DNA during genetic recombination and DNA repair, while the RuvA-RuvB complex plays an important role in the rescue of blocked DNA replication forks via replication fork reversal (RFR). RuvA specifically binds to HJ cruciform DNA, conferring on it an open structure. The RuvB hexamer acts as an ATP-dependent pump, pulling dsDNA into and through the RuvAB complex. HJ branch migration allows RuvC to scan DNA until it finds its consensus sequence, where it cleaves and resolves the cruciform DNA. This is Holliday junction branch migration complex subunit RuvA from Xylella fastidiosa (strain 9a5c).